A 311-amino-acid chain; its full sequence is uncharacterized protein (311 aa).

The next 10 membrane-spanning stretches (helical) occupy residues 6–26 (IFILLTAIFYSTQEISGKMLA), 33–53 (PFQVMMIVFLIGAIILLPMAV), 70–90 (YLALCGILAVSISMSMLQFAV), 97–117 (TAAVLFCTNAVFTIPFAYFIL), 123–143 (GITIVSIIVSLIGVVIIFNPA), 155–175 (LIGICFALVAAVVWSLYTVIS), 185–205 (YVFNCISFFFGVIALLILLVV), 219–239 (ILVLLYMGIFIKAVGYICYLG), 244–264 (TSAVTASTVFLIKPALATVLA), and 265–285 (ILILGESIEVNVVIGIVFIII). 2 consecutive EamA domains span residues 12–141 (AIFY…IIFN) and 166–292 (VVWS…INYS).

Belongs to the EamA transporter family.

Its subcellular location is the cell membrane. This is an uncharacterized protein from Clostridium kluyveri (strain ATCC 8527 / DSM 555 / NBRC 12016 / NCIMB 10680 / K1).